A 209-amino-acid chain; its full sequence is Glutathione S-transferase 2 (209 aa).

The region spanning 1 to 81 (MLDFYYLPGS…YLCDQYGDED (81 aa)) is the GST N-terminal domain. Glutathione contacts are provided by residues serine 10, 51–53 (RTI), and 65–67 (ESR). The GST C-terminal domain maps to 88–209 (DTIQRAIVNQ…SGAKEFLTYK (122 aa)).

It belongs to the GST superfamily. Theta family. As to quaternary structure, homodimer.

The catalysed reaction is RX + glutathione = an S-substituted glutathione + a halide anion + H(+). Functionally, conjugation of reduced glutathione to a wide number of exogenous and endogenous hydrophobic electrophiles. The polypeptide is Glutathione S-transferase 2 (GstD2) (Anopheles gambiae (African malaria mosquito)).